A 607-amino-acid polypeptide reads, in one-letter code: Guanine nucleotide-binding protein-like 1 (607 aa).

Residues 1-14 (MPRKKPFSVKQKKK) are compositionally biased toward basic residues. Positions 1–81 (MPRKKPFSVK…GPRGYDPNRY (81 aa)) are disordered. The segment covering 15-26 (QLQDKRERKRGL) has biased composition (basic and acidic residues). Phosphoserine occurs at positions 32, 33, and 34. Residues threonine 48 and threonine 50 each carry the phosphothreonine modification. Residues serine 51 and serine 68 each carry the phosphoserine modification. A CP-type G domain is found at 178–418 (WRQLWRVLEM…LCDCPGLIFP (241 aa)). 225–228 (NKVD) serves as a coordination point for GTP. Serine 324 carries the post-translational modification Phosphoserine. GTP is bound by residues 367 to 374 (GFPNVGKS) and 411 to 415 (DCPGL). The tract at residues 547–607 (GPAGDEEEEE…PYALLGEDEC (61 aa)) is disordered. Positions 550-584 (GDEEEEEEEELSSSCEEEGEEDRDADEEGEGDEET) are enriched in acidic residues. Phosphoserine occurs at positions 561, 562, and 563.

The protein belongs to the TRAFAC class YlqF/YawG GTPase family.

Functionally, possible regulatory or functional link with the histocompatibility cluster. The polypeptide is Guanine nucleotide-binding protein-like 1 (GNL1) (Pan troglodytes (Chimpanzee)).